Here is a 122-residue protein sequence, read N- to C-terminus: Holo-[acyl-carrier-protein] synthase (122 aa).

The Mg(2+) site is built by Asp8 and Glu56.

This sequence belongs to the P-Pant transferase superfamily. AcpS family. Requires Mg(2+) as cofactor.

It localises to the cytoplasm. It catalyses the reaction apo-[ACP] + CoA = holo-[ACP] + adenosine 3',5'-bisphosphate + H(+). Transfers the 4'-phosphopantetheine moiety from coenzyme A to a Ser of acyl-carrier-protein. This is Holo-[acyl-carrier-protein] synthase from Streptomyces griseus subsp. griseus (strain JCM 4626 / CBS 651.72 / NBRC 13350 / KCC S-0626 / ISP 5235).